The primary structure comprises 1394 residues: Leucine-rich PPR motif-containing protein, mitochondrial (1394 aa).

A mitochondrion-targeting transit peptide spans 1–59 (MAALLRSARWLLRAGAAPRLPLSLRLLPGGPGRLHAASYLPAARAGPVAGGLLSPARLY). 8 PPR repeats span residues 126-160 (LLRSCGSLLPELKLEERTEFAHRIWDTLQKLGAVY), 161-195 (DVSHYNALLKVYLQNEYKFSPTDFLAKMEEANIQP), 196-230 (NRVTYQRLIASYCNVGDIEGASKILGFMKTKDLPV), 231-265 (TEAVFSALVTGHARAGDMENAENILTVMRDAGIEP), 266-300 (GPDTYLALLNAYAEKGDIDHVKQTLEKVEKSELHL), 301-335 (MDRDLLQIIFSFSKAGYPQYVSEILEKVTCERRYI), 403-437 (HSFPLQFTLHCALLANKTDLAKALMKAVKEEGFPI), and 438-472 (RPHYFWPLLVGRRKEKNVQGIIEILKGMQELGVHP). N6-acetyllysine occurs at positions 155, 187, and 226. Lys292 bears the N6-acetyllysine mark. 2 positions are modified to N6-acetyllysine: Lys463 and Lys613. PPR repeat units lie at residues 678–709 (IRDVLKQLILVLCSEENMQKALELKAKYESDM), 710–746 (VTGGYAALINLCCRHDKVEDALNLKEEFDRLDSSAVL), 747–784 (DTGKYVGLVRVLAKHGKLQDAINILKEMKEKDVLIKDT), 785–820 (TALSFFHMLNGAALRGEIETVKQLHEAIVTLGLAEP), 821–856 (STNISFPLVTVHLEKGDLSTALEVAIDCYEKYKVLP), and 954–988 (RDQMYYNLLKLYKINGDWQRADAVWNKIQEENVIP). Residues 712–1067 (GGYAALINLC…AKEQNIVFNA (356 aa)) form an interaction with BECN1 and Aedes aegypti venom allergen-1 region. 2 positions are modified to N6-acetyllysine: Lys726 and Lys750. Phosphoserine is present on residues Ser1026, Ser1027, and Ser1029. 6 PPR repeats span residues 1031–1065 (TEPDFQKDILIACRLNQKKGAYDIFLNAKEQNIVF), 1066–1102 (NAETYSNLIKLLMSEDYFTQAMEVKAFAETHIKGFTL), 1103–1137 (NDAANSRLIITQVRRDYLKEAVTTLKTVLDQQQTP), 1138–1175 (SRLAVTRVIQALAMKGDVENIEVVQKMLNGLEDSIGLS), 1176–1210 (KMVFINNIALAQIKNNNIDAAIENIENMLTSENKV), and 1317–1351 (KEEAYNSLMKSYVSEKDVTSAKALYEHLTAKNTKL). An RNA-binding region spans residues 1121–1394 (KEAVTTLKTV…QLRKLRENSS (274 aa)). Position 1136 is a phosphothreonine (Thr1136). A Phosphoserine modification is found at Ser1138.

Component of mRNP complexes associated with HNRPA1. Component of the complex, at least composed of LRPPRC, BECN1 and BCL2; the interactions prevent BECN1 from forming an autophagy-inducing complex with PIK3C3. Interacts with CECR2, HEBP2, MAP1S and UXT. Interacts with PPARGC1A. Interacts with FOXO1. Interacts (via N-terminus) with EIF4E; the interaction promotes association of EIF4E with 4ESE-containing mRNAs. Interacts with exportin XPO1/CRM1; interacts both alone and in complex with EIF4E and 4ESE-containing mRNAs to form an EIF4E-dependent mRNA export complex. Interacts with importin IPO8; the interaction occurs when LRPPRC is in its RNA-free form and returns LRPPRC to the nucleus for further export rounds. Interacts with BECN1. Interacts with Aedes aegypti venom allergen-1; the interaction interrupts BECN1 and LRPPRC association. Expressed ubiquitously. Expression is highest in heart, skeletal muscle, kidney and liver, intermediate in brain, non-mucosal colon, spleen and placenta, and lowest in small intestine, thymus, lung and peripheral blood leukocytes.

It localises to the mitochondrion. The protein resides in the nucleus. It is found in the nucleoplasm. The protein localises to the nucleus inner membrane. Its subcellular location is the nucleus outer membrane. Functionally, may play a role in RNA metabolism in both nuclei and mitochondria. In the nucleus binds to HNRPA1-associated poly(A) mRNAs and is part of nmRNP complexes at late stages of mRNA maturation which are possibly associated with nuclear mRNA export. Positively modulates nuclear export of mRNAs containing the EIF4E sensitivity element (4ESE) by binding simultaneously to both EIF4E and the 4ESE and acting as a platform for assembly for the RNA export complex. Also binds to exportin XPO1/CRM1 to engage the nuclear pore and traffic the bound mRNAs to the cytoplasm. May bind mature mRNA in the nucleus outer membrane. In mitochondria binds to poly(A) mRNA. Plays a role in translation or stability of mitochondrially encoded cytochrome c oxidase (COX) subunits. May be involved in transcription regulation. Cooperates with PPARGC1A to regulate certain mitochondrially encoded genes and gluconeogenic genes and may regulate docking of PPARGC1A to transcription factors. Seems to be involved in the transcription regulation of the multidrug-related genes MDR1 and MVP. Part of a nuclear factor that binds to the invMED1 element of MDR1 and MVP gene promoters. Binds single-stranded DNA. Required for maintaining mitochondrial potential. Suppresses the initiation of basal levels of autophagy and mitophagy by sustaining BCL2 levels. This chain is Leucine-rich PPR motif-containing protein, mitochondrial (LRPPRC), found in Homo sapiens (Human).